A 194-amino-acid polypeptide reads, in one-letter code: Endonuclease V (194 aa).

Residues D31 and E95 each contribute to the Mg(2+) site.

Belongs to the endonuclease V family. Mg(2+) is required as a cofactor.

It is found in the cytoplasm. The catalysed reaction is Endonucleolytic cleavage at apurinic or apyrimidinic sites to products with a 5'-phosphate.. DNA repair enzyme involved in the repair of deaminated bases. Selectively cleaves double-stranded DNA at the second phosphodiester bond 3' to a deoxyinosine leaving behind the intact lesion on the nicked DNA. The chain is Endonuclease V from Pyrococcus abyssi (strain GE5 / Orsay).